Reading from the N-terminus, the 388-residue chain is Cystathionine gamma-synthase (388 aa).

A disordered region spans residues 1 to 24 (MSEDRTGHQGISGPATRAIHAGYR). Lys208 carries the post-translational modification N6-(pyridoxal phosphate)lysine.

Belongs to the trans-sulfuration enzymes family. In terms of assembly, homotetramer. Pyridoxal 5'-phosphate is required as a cofactor.

The protein resides in the cytoplasm. The catalysed reaction is O-succinyl-L-homoserine + L-cysteine = L,L-cystathionine + succinate + H(+). In terms of biological role, catalyzes the formation of L-cystathionine from O-succinyl-L-homoserine (OSHS) and L-cysteine, via a gamma-replacement reaction. In the absence of thiol, catalyzes gamma-elimination to form 2-oxobutanoate, succinate and ammonia. The polypeptide is Cystathionine gamma-synthase (metB) (Mycobacterium bovis (strain ATCC BAA-935 / AF2122/97)).